The primary structure comprises 292 residues: ATP synthase gamma chain (292 aa).

It belongs to the ATPase gamma chain family. In terms of assembly, F-type ATPases have 2 components, CF(1) - the catalytic core - and CF(0) - the membrane proton channel. CF(1) has five subunits: alpha(3), beta(3), gamma(1), delta(1), epsilon(1). CF(0) has three main subunits: a, b and c.

Its subcellular location is the cell inner membrane. Its function is as follows. Produces ATP from ADP in the presence of a proton gradient across the membrane. The gamma chain is believed to be important in regulating ATPase activity and the flow of protons through the CF(0) complex. This is ATP synthase gamma chain from Chlorobaculum tepidum (strain ATCC 49652 / DSM 12025 / NBRC 103806 / TLS) (Chlorobium tepidum).